A 363-amino-acid polypeptide reads, in one-letter code: Flagellar P-ring protein (363 aa).

Positions 1–20 are cleaved as a signal peptide; it reads MKKFTLLLLCFVLPMTSAYA.

It belongs to the FlgI family. In terms of assembly, the basal body constitutes a major portion of the flagellar organelle and consists of four rings (L,P,S, and M) mounted on a central rod.

The protein resides in the periplasm. The protein localises to the bacterial flagellum basal body. Assembles around the rod to form the L-ring and probably protects the motor/basal body from shearing forces during rotation. This is Flagellar P-ring protein from Vibrio vulnificus (strain YJ016).